We begin with the raw amino-acid sequence, 494 residues long: Cytochrome P450 2A3 (494 aa).

Position 131 is a phosphoserine (S131). K379 bears the N6-acetyllysine mark. C439 provides a ligand contact to heme.

Belongs to the cytochrome P450 family. It depends on heme as a cofactor. Lung.

It is found in the endoplasmic reticulum membrane. It localises to the microsome membrane. It carries out the reaction an organic molecule + reduced [NADPH--hemoprotein reductase] + O2 = an alcohol + oxidized [NADPH--hemoprotein reductase] + H2O + H(+). Its function is as follows. Cytochromes P450 are a group of heme-thiolate monooxygenases. In liver microsomes, this enzyme is involved in an NADPH-dependent electron transport pathway. It oxidizes a variety of structurally unrelated compounds, including steroids, fatty acids, and xenobiotics. In Rattus norvegicus (Rat), this protein is Cytochrome P450 2A3 (Cyp2a3).